A 159-amino-acid polypeptide reads, in one-letter code: Endoribonuclease YbeY (159 aa).

Positions 117, 121, and 127 each coordinate Zn(2+).

The protein belongs to the endoribonuclease YbeY family. Zn(2+) serves as cofactor.

It is found in the cytoplasm. In terms of biological role, single strand-specific metallo-endoribonuclease involved in late-stage 70S ribosome quality control and in maturation of the 3' terminus of the 16S rRNA. The protein is Endoribonuclease YbeY of Azorhizobium caulinodans (strain ATCC 43989 / DSM 5975 / JCM 20966 / LMG 6465 / NBRC 14845 / NCIMB 13405 / ORS 571).